The primary structure comprises 524 residues: Magnesium/proton exchanger 2 (524 aa).

The next 11 membrane-spanning stretches (helical) occupy residues 28–48 (GVRA…LSAI), 88–108 (IADV…LATI), 125–145 (GTLV…CVVM), 157–177 (LGVW…LYII), 185–205 (VITL…LLHA), 325–345 (VIGI…AFIP), 349–369 (IAHG…IAYG), 377–397 (ISCV…AAGT), 430–450 (IYVG…LFVY), 462–482 (LSFS…VLVL), and 496–516 (MWAW…VVLS).

Belongs to the Ca(2+):cation antiporter (CaCA) (TC 2.A.19) family. MHX subfamily.

Its subcellular location is the vacuole membrane. In terms of biological role, vacuolar transporter that exchanges protons with Mg(2+), Zn(2+) and Fe(2+) ions. May control the partitioning of Mg(2+) and Zn(2+) between plant organs. This is Magnesium/proton exchanger 2 (MHX2) from Oryza sativa subsp. japonica (Rice).